The sequence spans 128 residues: Fluoride-specific ion channel FluC 2 (128 aa).

4 helical membrane passes run 13-35 (ALVA…AIAG), 40-59 (LAAN…EAAA), 71-93 (LLGT…TAGL), and 97-119 (WMAA…GRAI).

It belongs to the fluoride channel Fluc/FEX (TC 1.A.43) family.

The protein localises to the cell membrane. The enzyme catalyses fluoride(in) = fluoride(out). Its function is as follows. Fluoride-specific ion channel. Important for reducing fluoride concentration in the cell, thus reducing its toxicity. The protein is Fluoride-specific ion channel FluC 2 of Halobacterium salinarum (strain ATCC 700922 / JCM 11081 / NRC-1) (Halobacterium halobium).